Consider the following 951-residue polypeptide: Bifunctional glutamine synthetase adenylyltransferase/adenylyl-removing enzyme (951 aa).

Positions 1-445 (MSILPLPALP…VFDELIGDDA (445 aa)) are adenylyl removase. Positions 454 to 951 (HSSYSSLWQD…VSWNKWLMGA (498 aa)) are adenylyl transferase.

It belongs to the GlnE family. Mg(2+) serves as cofactor.

The catalysed reaction is [glutamine synthetase]-O(4)-(5'-adenylyl)-L-tyrosine + phosphate = [glutamine synthetase]-L-tyrosine + ADP. It carries out the reaction [glutamine synthetase]-L-tyrosine + ATP = [glutamine synthetase]-O(4)-(5'-adenylyl)-L-tyrosine + diphosphate. In terms of biological role, involved in the regulation of glutamine synthetase GlnA, a key enzyme in the process to assimilate ammonia. When cellular nitrogen levels are high, the C-terminal adenylyl transferase (AT) inactivates GlnA by covalent transfer of an adenylyl group from ATP to specific tyrosine residue of GlnA, thus reducing its activity. Conversely, when nitrogen levels are low, the N-terminal adenylyl removase (AR) activates GlnA by removing the adenylyl group by phosphorolysis, increasing its activity. The regulatory region of GlnE binds the signal transduction protein PII (GlnB) which indicates the nitrogen status of the cell. In Pectobacterium atrosepticum (strain SCRI 1043 / ATCC BAA-672) (Erwinia carotovora subsp. atroseptica), this protein is Bifunctional glutamine synthetase adenylyltransferase/adenylyl-removing enzyme.